The sequence spans 414 residues: tRNA(Ile)-lysidine synthase (414 aa).

17-22 (SGGCDS) contributes to the ATP binding site.

It belongs to the tRNA(Ile)-lysidine synthase family.

The protein resides in the cytoplasm. The catalysed reaction is cytidine(34) in tRNA(Ile2) + L-lysine + ATP = lysidine(34) in tRNA(Ile2) + AMP + diphosphate + H(+). Ligates lysine onto the cytidine present at position 34 of the AUA codon-specific tRNA(Ile) that contains the anticodon CAU, in an ATP-dependent manner. Cytidine is converted to lysidine, thus changing the amino acid specificity of the tRNA from methionine to isoleucine. The chain is tRNA(Ile)-lysidine synthase from Exiguobacterium sibiricum (strain DSM 17290 / CCUG 55495 / CIP 109462 / JCM 13490 / 255-15).